We begin with the raw amino-acid sequence, 315 residues long: Gamma-hemolysin component C (315 aa).

Residues 1 to 29 form the signal peptide; it reads MLKNKILTTTLSVSLLAPLANPLLENAKA.

The protein belongs to the aerolysin family. Toxicity requires sequential binding and synergistic association of a class S and a class F component which form heterooligomeric complexes. HlgB (class F) associates with either hlgA thus forming an AB toxin or with hlgC thus forming a CB toxin.

The protein resides in the secreted. Functionally, toxin that seems to act by forming pores in the membrane of the cell. Has a hemolytic and a leucotoxic activity. This is Gamma-hemolysin component C (hlgC) from Staphylococcus aureus (strain NCTC 8325 / PS 47).